A 166-amino-acid polypeptide reads, in one-letter code: Interferon gamma (166 aa).

The N-terminal stretch at 1-23 is a signal peptide; that stretch reads MKYTSYFLALLLCVLLGFSGSYG. Q24 carries the post-translational modification Pyrrolidone carboxylic acid. N39 and N106 each carry an N-linked (GlcNAc...) asparagine glycan.

It belongs to the type II (or gamma) interferon family. As to quaternary structure, homodimer. Interacts with IFNGR1 (via extracellular domain); this interaction promotes IFNGR1 dimerization. Released primarily from activated T lymphocytes.

The protein resides in the secreted. Type II interferon produced by immune cells such as T-cells and NK cells that plays crucial roles in antimicrobial, antiviral, and antitumor responses by activating effector immune cells and enhancing antigen presentation. Primarily signals through the JAK-STAT pathway after interaction with its receptor IFNGR1 to affect gene regulation. Upon IFNG binding, IFNGR1 intracellular domain opens out to allow association of downstream signaling components JAK2, JAK1 and STAT1, leading to STAT1 activation, nuclear translocation and transcription of IFNG-regulated genes. Many of the induced genes are transcription factors such as IRF1 that are able to further drive regulation of a next wave of transcription. Plays a role in class I antigen presentation pathway by inducing a replacement of catalytic proteasome subunits with immunoproteasome subunits. In turn, increases the quantity, quality, and repertoire of peptides for class I MHC loading. Increases the efficiency of peptide generation also by inducing the expression of activator PA28 that associates with the proteasome and alters its proteolytic cleavage preference. Up-regulates as well MHC II complexes on the cell surface by promoting expression of several key molecules such as cathepsins B/CTSB, H/CTSH, and L/CTSL. Participates in the regulation of hematopoietic stem cells during development and under homeostatic conditions by affecting their development, quiescence, and differentiation. This chain is Interferon gamma (IFNG), found in Bos indicus (Zebu).